Reading from the N-terminus, the 83-residue chain is DNA-directed RNA polymerase subunit Rpo5 (83 aa).

The protein belongs to the archaeal Rpo5/eukaryotic RPB5 RNA polymerase subunit family. As to quaternary structure, part of the RNA polymerase complex.

It is found in the cytoplasm. It catalyses the reaction RNA(n) + a ribonucleoside 5'-triphosphate = RNA(n+1) + diphosphate. In terms of biological role, DNA-dependent RNA polymerase (RNAP) catalyzes the transcription of DNA into RNA using the four ribonucleoside triphosphates as substrates. The protein is DNA-directed RNA polymerase subunit Rpo5 of Nitrosopumilus maritimus (strain SCM1).